The following is a 1219-amino-acid chain: A disintegrin and metalloproteinase with thrombospondin motifs 18 (1219 aa).

Residues 1–47 form the signal peptide; it reads MECALLCLCALRAAGPGPPWGPAGLGRLAKALQLCCFCCASVAVALA. Positions 48–284 are excised as a propeptide; sequence SDSGSSGGSG…EYGGTGRPRR (237 aa). Asn-151 and Asn-190 each carry an N-linked (GlcNAc...) asparagine glycan. Residues 217-248 form a disordered region; sequence YPGSQRTYPGHSPSHTPPASQSQEPEYSHRRW. Over residues 218-241 the composition is skewed to polar residues; it reads PGSQRTYPGHSPSHTPPASQSQEP. The Peptidase M12B domain maps to 293 to 498; it reads LNVETLVVAD…PQAGCLVDEP (206 aa). 11 disulfides stabilise this stretch: Cys-369-Cys-420, Cys-395-Cys-402, Cys-414-Cys-493, Cys-453-Cys-477, Cys-521-Cys-546, Cys-532-Cys-553, Cys-541-Cys-572, Cys-566-Cys-577, Cys-601-Cys-638, Cys-605-Cys-643, and Cys-616-Cys-628. Position 436 (His-436) interacts with Zn(2+). Glu-437 is an active-site residue. Residues His-440 and His-446 each coordinate Zn(2+). Positions 589–644 constitute a TSP type-1 1 domain; sequence HGQWSAWSKWSECSRTCGGGVKFQERHCSNPKPQYGGKYCPGSSRIYKLCNINPCP. N-linked (GlcNAc...) asparagine glycosylation is found at Asn-745, Asn-838, Asn-865, and Asn-909. TSP type-1 domains are found at residues 931 to 990, 991 to 1049, 1052 to 1116, and 1121 to 1176; these read CPAY…NSHA, CPPE…GRCP, NRLQ…RTCP, and AVAS…NFCP. The PLAC domain maps to 1182–1219; that stretch reads DDPSCVDFFSWCHLVPQHGVCNHKFYGKQCCRSCTRKS.

It depends on Zn(2+) as a cofactor. The precursor is cleaved by a furin endopeptidase. Post-translationally, glycosylated. Can be O-fucosylated by POFUT2 on a serine or a threonine residue found within the consensus sequence C1-X(2)-(S/T)-C2-G of the TSP type-1 repeat domains where C1 and C2 are the first and second cysteine residue of the repeat, respectively. Fucosylated repeats can then be further glycosylated by the addition of a beta-1,3-glucose residue by the glucosyltransferase, B3GALTL. Fucosylation mediates the efficient secretion of ADAMTS family members. Can also be C-glycosylated with one or two mannose molecules on tryptophan residues within the consensus sequence W-X-X-W of the TPRs, and N-glycosylated. These other glycosylations can also facilitate secretion.

The protein localises to the secreted. Its subcellular location is the extracellular space. The protein resides in the extracellular matrix. The protein is A disintegrin and metalloproteinase with thrombospondin motifs 18 (Adamts18) of Mus musculus (Mouse).